We begin with the raw amino-acid sequence, 137 residues long: Basic phospholipase A2 homolog Cax-K49 (137 aa).

An N-terminal signal peptide occupies residues 1–16; the sequence is MRTFWIVAMLLVGVEG. Intrachain disulfides connect Cys42-Cys131, Cys44-Cys60, Cys59-Cys111, Cys65-Cys137, Cys66-Cys104, Cys73-Cys97, and Cys91-Cys102. An important for membrane-damaging activities in eukaryotes and bacteria; heparin-binding region spans residues 121 to 133; sequence KKYKIYPKFLCKK.

Homodimer; non-covalently linked. As to expression, expressed by the venom gland.

The protein localises to the secreted. In terms of biological role, snake venom phospholipase A2 homolog that lacks enzymatic activity. Displays edema-inducing activities and may be myotoxic. A model of myotoxic mechanism has been proposed: an apo Lys49-PLA2 is activated by the entrance of a hydrophobic molecule (e.g. fatty acid) at the hydrophobic channel of the protein leading to a reorientation of a monomer. This reorientation causes a transition between 'inactive' to 'active' states, causing alignment of C-terminal and membrane-docking sites (MDoS) side-by-side and putting the membrane-disruption sites (MDiS) in the same plane, exposed to solvent and in a symmetric position for both monomers. The MDoS region stabilizes the toxin on membrane by the interaction of charged residues with phospholipid head groups. Subsequently, the MDiS region destabilizes the membrane with penetration of hydrophobic residues. This insertion causes a disorganization of the membrane, allowing an uncontrolled influx of ions (i.e. calcium and sodium), and eventually triggering irreversible intracellular alterations and cell death. The protein is Basic phospholipase A2 homolog Cax-K49 of Crotalus atrox (Western diamondback rattlesnake).